The primary structure comprises 485 residues: Peptidyl-prolyl cis-trans isomerase-like 4 (485 aa).

The region spanning methionine 1–isoleucine 172 is the PPIase cyclophilin-type domain. In terms of domain architecture, RRM spans asparagine 251–serine 329. Residues asparagine 377–arginine 485 are disordered. Residues arginine 426 to arginine 485 are compositionally biased toward basic and acidic residues.

The protein belongs to the cyclophilin-type PPIase family. PPIL4 subfamily.

It is found in the nucleus. The catalysed reaction is [protein]-peptidylproline (omega=180) = [protein]-peptidylproline (omega=0). PPIases accelerate the folding of proteins. It catalyzes the cis-trans isomerization of proline imidic peptide bonds in oligopeptides. The polypeptide is Peptidyl-prolyl cis-trans isomerase-like 4 (CYP6) (Gibberella zeae (strain ATCC MYA-4620 / CBS 123657 / FGSC 9075 / NRRL 31084 / PH-1) (Wheat head blight fungus)).